A 156-amino-acid chain; its full sequence is MSRRNAAVKRPVLPDPQFNSRLASMMISRLMKHGKKSTAQRILSDAFSLISERTGGDAVELFETAVKNATPLVEVRARRVGGATYQVPMEVRQERGTAMALRWLVTFSRARNGKSMSQKLAGELMDAANETGSSVKKREDTHKMAEANKAFAHYRY.

The protein belongs to the universal ribosomal protein uS7 family. Part of the 30S ribosomal subunit. Contacts proteins S9 and S11.

In terms of biological role, one of the primary rRNA binding proteins, it binds directly to 16S rRNA where it nucleates assembly of the head domain of the 30S subunit. Is located at the subunit interface close to the decoding center, probably blocks exit of the E-site tRNA. The polypeptide is Small ribosomal subunit protein uS7 (Prochlorococcus marinus (strain MIT 9312)).